A 61-amino-acid polypeptide reads, in one-letter code: Large ribosomal subunit protein bL32 (61 aa).

Residues 1–20 are disordered; it reads MAVQKSKPSRAKRGKRRSHD. A compositionally biased stretch (basic residues) spans 7 to 19; that stretch reads KPSRAKRGKRRSH.

The protein belongs to the bacterial ribosomal protein bL32 family.

This is Large ribosomal subunit protein bL32 from Buchnera aphidicola subsp. Cinara cedri (strain Cc).